The following is a 98-amino-acid chain: Aspartyl/glutamyl-tRNA(Asn/Gln) amidotransferase subunit C (98 aa).

The protein belongs to the GatC family. In terms of assembly, heterotrimer of A, B and C subunits.

The catalysed reaction is L-glutamyl-tRNA(Gln) + L-glutamine + ATP + H2O = L-glutaminyl-tRNA(Gln) + L-glutamate + ADP + phosphate + H(+). It catalyses the reaction L-aspartyl-tRNA(Asn) + L-glutamine + ATP + H2O = L-asparaginyl-tRNA(Asn) + L-glutamate + ADP + phosphate + 2 H(+). Allows the formation of correctly charged Asn-tRNA(Asn) or Gln-tRNA(Gln) through the transamidation of misacylated Asp-tRNA(Asn) or Glu-tRNA(Gln) in organisms which lack either or both of asparaginyl-tRNA or glutaminyl-tRNA synthetases. The reaction takes place in the presence of glutamine and ATP through an activated phospho-Asp-tRNA(Asn) or phospho-Glu-tRNA(Gln). The protein is Aspartyl/glutamyl-tRNA(Asn/Gln) amidotransferase subunit C of Roseiflexus castenholzii (strain DSM 13941 / HLO8).